A 251-amino-acid polypeptide reads, in one-letter code: Probable transcriptional regulatory protein TGRD_462 (251 aa).

Belongs to the TACO1 family.

It localises to the cytoplasm. This chain is Probable transcriptional regulatory protein TGRD_462, found in Endomicrobium trichonymphae.